We begin with the raw amino-acid sequence, 178 residues long: Large ribosomal subunit protein uL6 (178 aa).

Belongs to the universal ribosomal protein uL6 family. As to quaternary structure, part of the 50S ribosomal subunit.

In terms of biological role, this protein binds to the 23S rRNA, and is important in its secondary structure. It is located near the subunit interface in the base of the L7/L12 stalk, and near the tRNA binding site of the peptidyltransferase center. The protein is Large ribosomal subunit protein uL6 of Paenarthrobacter aurescens (strain TC1).